We begin with the raw amino-acid sequence, 307 residues long: UDP-3-O-acyl-N-acetylglucosamine deacetylase (307 aa).

Zn(2+)-binding residues include His78, His241, and Asp245. The active-site Proton donor is His268.

It belongs to the LpxC family. Zn(2+) serves as cofactor.

The enzyme catalyses a UDP-3-O-[(3R)-3-hydroxyacyl]-N-acetyl-alpha-D-glucosamine + H2O = a UDP-3-O-[(3R)-3-hydroxyacyl]-alpha-D-glucosamine + acetate. It participates in glycolipid biosynthesis; lipid IV(A) biosynthesis; lipid IV(A) from (3R)-3-hydroxytetradecanoyl-[acyl-carrier-protein] and UDP-N-acetyl-alpha-D-glucosamine: step 2/6. Catalyzes the hydrolysis of UDP-3-O-myristoyl-N-acetylglucosamine to form UDP-3-O-myristoylglucosamine and acetate, the committed step in lipid A biosynthesis. The polypeptide is UDP-3-O-acyl-N-acetylglucosamine deacetylase (Bordetella bronchiseptica (strain ATCC BAA-588 / NCTC 13252 / RB50) (Alcaligenes bronchisepticus)).